The primary structure comprises 193 residues: Xanthine phosphoribosyltransferase (193 aa).

2 residues coordinate xanthine: Leu20 and Thr27. 128 to 132 (ANGQA) contributes to the 5-phospho-alpha-D-ribose 1-diphosphate binding site. Position 156 (Lys156) interacts with xanthine.

Belongs to the purine/pyrimidine phosphoribosyltransferase family. Xpt subfamily. Homodimer.

It localises to the cytoplasm. It catalyses the reaction XMP + diphosphate = xanthine + 5-phospho-alpha-D-ribose 1-diphosphate. The protein operates within purine metabolism; XMP biosynthesis via salvage pathway; XMP from xanthine: step 1/1. In terms of biological role, converts the preformed base xanthine, a product of nucleic acid breakdown, to xanthosine 5'-monophosphate (XMP), so it can be reused for RNA or DNA synthesis. This chain is Xanthine phosphoribosyltransferase, found in Streptococcus pyogenes serotype M3 (strain ATCC BAA-595 / MGAS315).